The chain runs to 130 residues: Small ribosomal subunit protein uS11 (130 aa).

This sequence belongs to the universal ribosomal protein uS11 family. Part of the 30S ribosomal subunit. Interacts with proteins S7 and S18. Binds to IF-3.

Located on the platform of the 30S subunit, it bridges several disparate RNA helices of the 16S rRNA. Forms part of the Shine-Dalgarno cleft in the 70S ribosome. The chain is Small ribosomal subunit protein uS11 from Shewanella baltica (strain OS223).